Consider the following 99-residue polypeptide: Nucleoid-associated protein EbfC (99 aa).

This sequence belongs to the YbaB/EbfC family. As to quaternary structure, homodimer.

The protein resides in the cytoplasm. It is found in the nucleoid. Binds to DNA and alters its conformation. May be involved in regulation of gene expression, nucleoid organization and DNA protection. This is Nucleoid-associated protein EbfC from Borreliella afzelii (strain PKo) (Borrelia afzelii).